A 1067-amino-acid chain; its full sequence is Probable importin subunit beta-4 (1067 aa).

The Importin N-terminal domain occupies 27–94 (ATRALETKYL…RSNLLDITLK (68 aa)). 6 HEAT repeats span residues 159–196 (KLLL…VLES), 379–416 (GNLP…EIPT), 420–457 (KHHA…GLDK), 591–633 (PFLE…SVET), 890–927 (PFTR…FSTE), and 1013–1050 (QHLG…EIAP).

Belongs to the importin beta family.

The protein localises to the cytoplasm. It localises to the nucleus. The protein resides in the nucleus envelope. Functionally, required for nuclear protein import, its predominant substrate seems to be ribosomal proteins. Binds to nucleoporins and the GTP-bound form of gsp1 (Ran). The chain is Probable importin subunit beta-4 (kap123) from Schizosaccharomyces pombe (strain 972 / ATCC 24843) (Fission yeast).